The primary structure comprises 122 residues: Large ribosomal subunit protein uL14c (122 aa).

Belongs to the universal ribosomal protein uL14 family. In terms of assembly, part of the 50S ribosomal subunit.

The protein localises to the plastid. It is found in the chloroplast. Functionally, binds to 23S rRNA. This Gossypium barbadense (Sea Island cotton) protein is Large ribosomal subunit protein uL14c.